A 181-amino-acid chain; its full sequence is Type II secretion system protein H (181 aa).

Residues 1–5 (MRQRG) constitute a propeptide, leader sequence. Residue Phe6 is modified to N-methylphenylalanine. A helical transmembrane segment spans residues 6–29 (FTLLEIMLVVLLAGVAATLVMMAI).

This sequence belongs to the GSP H family. In terms of assembly, type II secretion is composed of four main components: the outer membrane complex, the inner membrane complex, the cytoplasmic secretion ATPase and the periplasm-spanning pseudopilus. Interacts with core component OutG. Cleaved by prepilin peptidase. In terms of processing, methylated by prepilin peptidase at the amino group of the N-terminal phenylalanine once the leader sequence is cleaved by prepilin peptidase.

The protein resides in the cell inner membrane. Functionally, component of the type II secretion system required for the energy-dependent secretion of extracellular factors such as proteases and toxins from the periplasm. Part of the pseudopilus tip complex that is critical for the recognition and binding of secretion substrates. The protein is Type II secretion system protein H (outH) of Dickeya chrysanthemi (Pectobacterium chrysanthemi).